The sequence spans 180 residues: Probable RNA 2'-phosphotransferase (180 aa).

This sequence belongs to the KptA/TPT1 family.

In terms of biological role, removes the 2'-phosphate from RNA via an intermediate in which the phosphate is ADP-ribosylated by NAD followed by a presumed transesterification to release the RNA and generate ADP-ribose 1''-2''-cyclic phosphate (APPR&gt;P). May function as an ADP-ribosylase. The sequence is that of Probable RNA 2'-phosphotransferase from Pectobacterium atrosepticum (strain SCRI 1043 / ATCC BAA-672) (Erwinia carotovora subsp. atroseptica).